A 152-amino-acid chain; its full sequence is MEQIDRTLATEKNIALVAHDHCKSSLLEWVKNNSEQLSHHKLFATGTTGNLVNHHTGLEVTQMLSGPMGGDQQIGAMIAEKKIDILIFFWDPLNAVPHDPDVKALLRLATVWNIPVATNRATANFLISSPLFSQESKIKIPDYEGYLKERLK.

The region spanning 6 to 152 (RTLATEKNIA…YEGYLKERLK (147 aa)) is the MGS-like domain. Residues H19, K23, 45–48 (TGTT), and 65–66 (SG) each bind substrate. The Proton donor/acceptor role is filled by D71. Substrate is bound at residue H98.

The protein belongs to the methylglyoxal synthase family.

The enzyme catalyses dihydroxyacetone phosphate = methylglyoxal + phosphate. Functionally, catalyzes the formation of methylglyoxal from dihydroxyacetone phosphate. The sequence is that of Methylglyoxal synthase from Proteus mirabilis (strain HI4320).